The chain runs to 152 residues: Transcriptional regulator MraZ (152 aa).

SpoVT-AbrB domains lie at 5-52 (ATMV…TLPA) and 81-124 (ASEC…DEQT).

The protein belongs to the MraZ family. As to quaternary structure, forms oligomers.

Its subcellular location is the cytoplasm. The protein localises to the nucleoid. In terms of biological role, negatively regulates its own expression and that of the subsequent genes in the proximal part of the division and cell wall (dcw) gene cluster. Acts by binding directly to DNA. May also regulate the expression of genes outside the dcw cluster. The protein is Transcriptional regulator MraZ of Yersinia enterocolitica serotype O:8 / biotype 1B (strain NCTC 13174 / 8081).